The sequence spans 209 residues: Large ribosomal subunit protein uL3 (209 aa).

The interval 128-154 (QQRGPMTHGSKFHRAPGSMGASSDPSR) is disordered.

This sequence belongs to the universal ribosomal protein uL3 family. Part of the 50S ribosomal subunit. Forms a cluster with proteins L14 and L19.

In terms of biological role, one of the primary rRNA binding proteins, it binds directly near the 3'-end of the 23S rRNA, where it nucleates assembly of the 50S subunit. In Clostridium beijerinckii (strain ATCC 51743 / NCIMB 8052) (Clostridium acetobutylicum), this protein is Large ribosomal subunit protein uL3.